Here is a 141-residue protein sequence, read N- to C-terminus: MLSPKRTKYRKPHRGNRKGQALRGNKISFGDFALQALEPGWITSRQIEAGRRAMSRYAKRGGKLWIRMFPDRSITARAAETRMGAGKGAPDYWVCIVKPGKILYELAGVPETIARASMRIAAYKMPVKTKFLVRDEYVAPQ.

Positions methionine 1–arginine 17 are enriched in basic residues. The disordered stretch occupies residues methionine 1–alanine 21.

This sequence belongs to the universal ribosomal protein uL16 family. In terms of assembly, part of the 50S ribosomal subunit.

It is found in the plastid. Its subcellular location is the chloroplast. In Ostreococcus tauri, this protein is Large ribosomal subunit protein uL16c.